We begin with the raw amino-acid sequence, 502 residues long: Xylan O-acetyltransferase 13 (502 aa).

The Cytoplasmic portion of the chain corresponds to 1–53; the sequence is MWSALFSHLREVHKRSGVKEEKLIMKSPPAAGEAGCHKPQATATNKMTVLQSP. The helical; Signal-anchor for type II membrane protein transmembrane segment at 54-76 threads the bilayer; the sequence is LGLRTILTSLVAFFIVVSSVSLL. Topologically, residues 77 to 502 are lumenal; the sequence is FDRGQDAQAQ…EFLYAYIMHK (426 aa). Disulfide bonds link C152/C203, C174/C239, C183/C483, and C399/C479. Residues N153, N163, N189, and N209 are each glycosylated (N-linked (GlcNAc...) asparagine). The short motif at 226–228 is the GDS motif element; sequence GDS. S228 serves as the catalytic Nucleophile. N255, N267, N372, N401, and N442 each carry an N-linked (GlcNAc...) asparagine glycan. D478 functions as the Proton donor in the catalytic mechanism. A DXXH motif motif is present at residues 478-481; it reads DCTH. The active-site Proton acceptor is the H481.

It belongs to the PC-esterase family. TBL subfamily.

The protein resides in the golgi apparatus membrane. Functionally, xylan acetyltransferase required for 2-O- and 3-O-monoacetylation of xylosyl residues in xylan. Catalyzes the 2-O-acetylation of xylan, followed by nonenzymatic acetyl migration to the O-3 position, resulting in products that are monoacetylated at both O-2 and O-3 positions. The sequence is that of Xylan O-acetyltransferase 13 from Oryza sativa subsp. japonica (Rice).